We begin with the raw amino-acid sequence, 273 residues long: Large ribosomal subunit protein uL2 (273 aa).

Disordered stretches follow at residues 32 to 53 and 221 to 273; these read PLVE…TTRH and RGTA…RRSK. Over residues 39-48 the composition is skewed to low complexity; it reads KSGGRNNNGR.

This sequence belongs to the universal ribosomal protein uL2 family. As to quaternary structure, part of the 50S ribosomal subunit. Forms a bridge to the 30S subunit in the 70S ribosome.

In terms of biological role, one of the primary rRNA binding proteins. Required for association of the 30S and 50S subunits to form the 70S ribosome, for tRNA binding and peptide bond formation. It has been suggested to have peptidyltransferase activity; this is somewhat controversial. Makes several contacts with the 16S rRNA in the 70S ribosome. The chain is Large ribosomal subunit protein uL2 from Erwinia tasmaniensis (strain DSM 17950 / CFBP 7177 / CIP 109463 / NCPPB 4357 / Et1/99).